Reading from the N-terminus, the 451-residue chain is Tryptophan--tRNA ligase (451 aa).

ATP-binding positions include 10-12 (TTT) and 18-19 (GN). The 'HIGH' region motif lies at 11–19 (TTGTPHLGN). An L-tryptophan-binding site is contributed by D143. Residues 155-157 (GRD), L195, and 202-206 (KMSKS) each bind ATP. The 'KMSKS' region motif lies at 202 to 206 (KMSKS).

This sequence belongs to the class-I aminoacyl-tRNA synthetase family. Homodimer.

The protein localises to the cytoplasm. It catalyses the reaction tRNA(Trp) + L-tryptophan + ATP = L-tryptophyl-tRNA(Trp) + AMP + diphosphate + H(+). In terms of biological role, catalyzes the attachment of tryptophan to tRNA(Trp). This chain is Tryptophan--tRNA ligase, found in Bordetella bronchiseptica (strain ATCC BAA-588 / NCTC 13252 / RB50) (Alcaligenes bronchisepticus).